A 58-amino-acid chain; its full sequence is MFTVFLLVVLATTGVSFTLDRASDGGNAVAKKSDVTARFNWRCCLIPACRRNHKKFCG.

Residues 1–16 (MFTVFLLVVLATTGVS) form the signal peptide. Residues 17–38 (FTLDRASDGGNAVAKKSDVTAR) constitute a propeptide that is removed on maturation. The interval 40-42 (NWR) is interaction with ADRA1B. 2 cysteine pairs are disulfide-bonded: C43–C49 and C44–C57. The segment at 45-47 (LIP) is lacks the Ser-Xaa-Pro motif that is crucial for potent interaction with nAChR. A Cysteine amide modification is found at C57.

The protein belongs to the conotoxin A superfamily. Expressed by the venom duct.

It localises to the secreted. Its function is as follows. Allosteric inhibitor of alpha-1B adrenergic receptors (ADRA1B). Binds to an allosteric modulatory site on transmembrane helix 6 and 7 at the base of extracellular loop 3 of ADRA1B. Also weakly inhibits alpha-1A (ADRA1A) and alpha-1D (ADRA1D) adrenergic receptors in a competitive manner. Potently inhibits contractions of vas deferens, spleen and aorta in response to noradrenaline. May also inhibits nicotinic acetylcholine receptors with a possible distinct nAChR binding mode from other alpha-conotoxins, due to a different three residue motif (lacks the Ser-Xaa-Pro motif). This is Rho-conotoxin TIA from Conus tulipa (Fish-hunting cone snail).